Reading from the N-terminus, the 465-residue chain is Probable zinc metalloprotease PTT_17836 (465 aa).

The N-terminal stretch at M1 to S20 is a signal peptide. N-linked (GlcNAc...) asparagine glycosylation is present at N140. H163, D183, and E216 together coordinate Zn(2+). N231 is a glycosylation site (N-linked (GlcNAc...) asparagine). D243 is a binding site for Zn(2+). N-linked (GlcNAc...) asparagine glycosylation is found at N272, N330, N378, N384, N421, and N426. The Fibronectin type-III domain maps to A371–N464.

The protein belongs to the peptidase M28 family. M28B subfamily. It depends on Zn(2+) as a cofactor.

The protein localises to the secreted. This chain is Probable zinc metalloprotease PTT_17836, found in Pyrenophora teres f. teres (strain 0-1) (Barley net blotch fungus).